The chain runs to 179 residues: Large ribosomal subunit protein uL5 (179 aa).

The protein belongs to the universal ribosomal protein uL5 family. In terms of assembly, part of the 50S ribosomal subunit; part of the 5S rRNA/L5/L18/L25 subcomplex. Contacts the 5S rRNA and the P site tRNA. Forms a bridge to the 30S subunit in the 70S ribosome.

In terms of biological role, this is one of the proteins that bind and probably mediate the attachment of the 5S RNA into the large ribosomal subunit, where it forms part of the central protuberance. In the 70S ribosome it contacts protein S13 of the 30S subunit (bridge B1b), connecting the 2 subunits; this bridge is implicated in subunit movement. Contacts the P site tRNA; the 5S rRNA and some of its associated proteins might help stabilize positioning of ribosome-bound tRNAs. This chain is Large ribosomal subunit protein uL5, found in Francisella tularensis subsp. mediasiatica (strain FSC147).